We begin with the raw amino-acid sequence, 647 residues long: DNA topoisomerase 4 subunit B (647 aa).

Residues tyrosine 11, asparagine 51, aspartate 78, 118–124 (GLHGVGS), and lysine 344 each bind ATP. Positions 391 to 401 (AARKARDESRN) are enriched in basic and acidic residues. Residues 391-421 (AARKARDESRNGKKNKKDKGLLSGKLTPAQS) are disordered. The region spanning 427-541 (NELYLVEGDS…AGHVYIALPP (115 aa)) is the Toprim domain. 3 residues coordinate Mg(2+): glutamate 433, aspartate 506, and aspartate 508.

The protein belongs to the type II topoisomerase family. ParE type 2 subfamily. As to quaternary structure, heterotetramer composed of ParC and ParE. Requires Mg(2+) as cofactor. Mn(2+) serves as cofactor. It depends on Ca(2+) as a cofactor.

It catalyses the reaction ATP-dependent breakage, passage and rejoining of double-stranded DNA.. Its activity is regulated as follows. Inhibited by quinolones, such as levofloxacin. Functionally, topoisomerase IV is essential for chromosome segregation. It relaxes supercoiled DNA. Performs the decatenation events required during the replication of a circular DNA molecule. This is DNA topoisomerase 4 subunit B from Streptococcus pneumoniae serotype 4 (strain ATCC BAA-334 / TIGR4).